The following is a 429-amino-acid chain: Enolase (429 aa).

Gln-163 contributes to the (2R)-2-phosphoglycerate binding site. Glu-205 (proton donor) is an active-site residue. Asp-242, Glu-285, and Asp-312 together coordinate Mg(2+). Residues Lys-337, Arg-366, Ser-367, and Lys-388 each contribute to the (2R)-2-phosphoglycerate site. Lys-337 (proton acceptor) is an active-site residue.

The protein belongs to the enolase family. It depends on Mg(2+) as a cofactor.

Its subcellular location is the cytoplasm. The protein localises to the secreted. The protein resides in the cell surface. The catalysed reaction is (2R)-2-phosphoglycerate = phosphoenolpyruvate + H2O. It participates in carbohydrate degradation; glycolysis; pyruvate from D-glyceraldehyde 3-phosphate: step 4/5. Functionally, catalyzes the reversible conversion of 2-phosphoglycerate (2-PG) into phosphoenolpyruvate (PEP). It is essential for the degradation of carbohydrates via glycolysis. This is Enolase from Aromatoleum aromaticum (strain DSM 19018 / LMG 30748 / EbN1) (Azoarcus sp. (strain EbN1)).